Here is a 1595-residue protein sequence, read N- to C-terminus: DNA-directed RNA polymerase subunit beta'' (1595 aa).

Residues cysteine 216, cysteine 286, cysteine 294, and cysteine 297 each coordinate Zn(2+).

Belongs to the RNA polymerase beta' chain family. RpoC2 subfamily. In terms of assembly, in plastids the minimal PEP RNA polymerase catalytic core is composed of four subunits: alpha, beta, beta', and beta''. When a (nuclear-encoded) sigma factor is associated with the core the holoenzyme is formed, which can initiate transcription. Requires Zn(2+) as cofactor.

It localises to the plastid. It is found in the chloroplast. It carries out the reaction RNA(n) + a ribonucleoside 5'-triphosphate = RNA(n+1) + diphosphate. DNA-dependent RNA polymerase catalyzes the transcription of DNA into RNA using the four ribonucleoside triphosphates as substrates. This chain is DNA-directed RNA polymerase subunit beta'', found in Bigelowiella natans (Pedinomonas minutissima).